The primary structure comprises 388 residues: Lamin tail domain-containing protein 1 (388 aa).

One can recognise an LTD domain in the interval 136-254 (EVGQFTSSSL…QAIAWYTPIH (119 aa)). The segment at 349 to 388 (EPHNTSTAGGRLDRQPRTRSTRPNRASGSKKKKTSESQKQ) is disordered. Over residues 365-381 (RTRSTRPNRASGSKKKK) the composition is skewed to basic residues.

It belongs to the intermediate filament family.

This is Lamin tail domain-containing protein 1 (LMNTD1) from Homo sapiens (Human).